A 99-amino-acid polypeptide reads, in one-letter code: Probable small ribosomal subunit protein cS23 (99 aa).

This sequence belongs to the chloroplast-specific ribosomal protein cS23 family. As to quaternary structure, part of the 30S ribosomal subunit.

Probably a ribosomal protein or a ribosome-associated protein. In Synechococcus sp. (strain JA-3-3Ab) (Cyanobacteria bacterium Yellowstone A-Prime), this protein is Probable small ribosomal subunit protein cS23.